Here is a 410-residue protein sequence, read N- to C-terminus: Putative F-box/kelch-repeat protein At1g15680 (410 aa).

The 46-residue stretch at 13-58 (CKRRIELPEELLAEIVARLPFISITRFKSVCKGWRSLIESTYFRHL) folds into the F-box domain. Kelch repeat units lie at residues 177–227 (VVCM…SLKK) and 274–327 (AYTT…YFPV).

The sequence is that of Putative F-box/kelch-repeat protein At1g15680 from Arabidopsis thaliana (Mouse-ear cress).